The sequence spans 280 residues: Shikimate dehydrogenase (NADP(+)) (280 aa).

Residues 20–22 and Thr67 each bind shikimate; that span reads SLS. Lys71 serves as the catalytic Proton acceptor. Positions 92 and 107 each coordinate shikimate. Residues 131-135 and Gly220 each bind NADP(+); that span reads GAGGA. Residue Tyr222 coordinates shikimate. Gly243 provides a ligand contact to NADP(+).

It belongs to the shikimate dehydrogenase family. Homodimer.

The catalysed reaction is shikimate + NADP(+) = 3-dehydroshikimate + NADPH + H(+). Its pathway is metabolic intermediate biosynthesis; chorismate biosynthesis; chorismate from D-erythrose 4-phosphate and phosphoenolpyruvate: step 4/7. Involved in the biosynthesis of the chorismate, which leads to the biosynthesis of aromatic amino acids. Catalyzes the reversible NADPH linked reduction of 3-dehydroshikimate (DHSA) to yield shikimate (SA). In Maricaulis maris (strain MCS10) (Caulobacter maris), this protein is Shikimate dehydrogenase (NADP(+)).